We begin with the raw amino-acid sequence, 910 residues long: Schlafen family member 8 (910 aa).

The tract at residues 1–354 is n'-domain region; the sequence is METHPSLAVK…WVRMMVDFGP (354 aa). Active-site residues include E205 and E210. Residues H280, C282, and C319 each contribute to the Zn(2+) site. Position 599–606 (599–606) interacts with ATP; it reads GLPGSGKT.

Belongs to the Schlafen family. Subgroup III subfamily. Mg(2+) is required as a cofactor. In T-cells, expressed at relatively constant levels during development: expressed in immature CD3(-)CD4(-)CD8(-) T-cells (DN stage), in CD4(+)CD8(+) double-positive stage (DP) and mature CD4(+) or CD8(+) thymocytes. Expression is slightly reduced at the DP stage.

Its subcellular location is the cytoplasm. Endoribonuclease that cleaves tRNAs and rRNAs. Cleaves tRNAs 11 nucleotides from the 3'-terminus at the acceptor stem. May be involved in immune system via regulation of inflammation. The protein is Schlafen family member 8 of Mus musculus (Mouse).